An 883-amino-acid polypeptide reads, in one-letter code: Translation initiation factor IF-2 (883 aa).

Disordered regions lie at residues 52–102 (KGRD…VNVE) and 115–297 (VEAE…PTQP). Composition is skewed to basic and acidic residues over residues 115 to 179 (VEAE…REAT) and 204 to 237 (AAEKEEARRREEEKERRRLEQEARREREAEERAA). The span at 239–248 (KTGATAPAAK) shows a compositional bias: low complexity. Positions 265-275 (PGRRGGKKGGR) are enriched in basic residues. Positions 276-285 (RAASGGEAAK) are enriched in low complexity. Residues 383–550 (PRPPVVTVMG…AILLQAELME (168 aa)) enclose the tr-type G domain. Positions 392 to 399 (GHVDHGKT) are G1. Residue 392–399 (GHVDHGKT) participates in GTP binding. Residues 417 to 421 (GITQH) form a G2 region. The interval 438–441 (DTPG) is G3. GTP contacts are provided by residues 438–442 (DTPGH) and 492–495 (NKID). The segment at 492–495 (NKID) is G4. The G5 stretch occupies residues 528 to 530 (SAK).

The protein belongs to the TRAFAC class translation factor GTPase superfamily. Classic translation factor GTPase family. IF-2 subfamily.

It localises to the cytoplasm. One of the essential components for the initiation of protein synthesis. Protects formylmethionyl-tRNA from spontaneous hydrolysis and promotes its binding to the 30S ribosomal subunits. Also involved in the hydrolysis of GTP during the formation of the 70S ribosomal complex. This chain is Translation initiation factor IF-2, found in Alkalilimnicola ehrlichii (strain ATCC BAA-1101 / DSM 17681 / MLHE-1).